Reading from the N-terminus, the 645-residue chain is Phosphomethylpyrimidine synthase (645 aa).

Polar residues predominate over residues 1-12 (MSHNTVIPTTDI). Residues 1–25 (MSHNTVIPTTDISPKPDPARPRKAQ) are disordered. Substrate-binding positions include N253, M282, Y311, H347, 367–369 (SRG), 408–411 (DGLR), and E447. H451 provides a ligand contact to Zn(2+). Y474 contacts substrate. A Zn(2+)-binding site is contributed by H515. [4Fe-4S] cluster-binding residues include C595, C598, and C603.

Belongs to the ThiC family. Homodimer. [4Fe-4S] cluster is required as a cofactor.

It catalyses the reaction 5-amino-1-(5-phospho-beta-D-ribosyl)imidazole + S-adenosyl-L-methionine = 4-amino-2-methyl-5-(phosphooxymethyl)pyrimidine + CO + 5'-deoxyadenosine + formate + L-methionine + 3 H(+). It functions in the pathway cofactor biosynthesis; thiamine diphosphate biosynthesis. Its function is as follows. Catalyzes the synthesis of the hydroxymethylpyrimidine phosphate (HMP-P) moiety of thiamine from aminoimidazole ribotide (AIR) in a radical S-adenosyl-L-methionine (SAM)-dependent reaction. In Photorhabdus laumondii subsp. laumondii (strain DSM 15139 / CIP 105565 / TT01) (Photorhabdus luminescens subsp. laumondii), this protein is Phosphomethylpyrimidine synthase.